We begin with the raw amino-acid sequence, 134 residues long: S-adenosylmethionine decarboxylase proenzyme (134 aa).

Serine 64 (schiff-base intermediate with substrate; via pyruvic acid) is an active-site residue. Serine 64 is subject to Pyruvic acid (Ser); by autocatalysis. Histidine 69 (proton acceptor; for processing activity) is an active-site residue. The active-site Proton donor; for catalytic activity is the cysteine 84.

This sequence belongs to the prokaryotic AdoMetDC family. Type 1 subfamily. As to quaternary structure, heterotetramer of two alpha and two beta chains arranged as a dimer of alpha/beta heterodimers. Pyruvate serves as cofactor. Post-translationally, is synthesized initially as an inactive proenzyme. Formation of the active enzyme involves a self-maturation process in which the active site pyruvoyl group is generated from an internal serine residue via an autocatalytic post-translational modification. Two non-identical subunits are generated from the proenzyme in this reaction, and the pyruvate is formed at the N-terminus of the alpha chain, which is derived from the carboxyl end of the proenzyme. The post-translation cleavage follows an unusual pathway, termed non-hydrolytic serinolysis, in which the side chain hydroxyl group of the serine supplies its oxygen atom to form the C-terminus of the beta chain, while the remainder of the serine residue undergoes an oxidative deamination to produce ammonia and the pyruvoyl group blocking the N-terminus of the alpha chain.

The catalysed reaction is S-adenosyl-L-methionine + H(+) = S-adenosyl 3-(methylsulfanyl)propylamine + CO2. It functions in the pathway amine and polyamine biosynthesis; S-adenosylmethioninamine biosynthesis; S-adenosylmethioninamine from S-adenosyl-L-methionine: step 1/1. Functionally, catalyzes the decarboxylation of S-adenosylmethionine to S-adenosylmethioninamine (dcAdoMet), the propylamine donor required for the synthesis of the polyamines spermine and spermidine from the diamine putrescine. The polypeptide is S-adenosylmethionine decarboxylase proenzyme (Hydrogenobaculum sp. (strain Y04AAS1)).